The following is a 1104-amino-acid chain: MEPSRALLGCLASAAAAAPPGEDGAGAGAEEEEEEEEEAAAAVGPGELGCDAPLPYWTAVFEYEAAGEDELTLRLGDVVEVLSKDSQVSGDEGWWTGQLNQRVGIFPSNYVTPRSAFSSRCQPGGEDPSCYPPIQLLEIDFAELTLEEIIGIGGFGKVYRAFWIGDEVAVKAARHDPDEDISQTIENVRQEAKLFAMLKHPNIIALRGVCLKEPNLCLVMEFARGGPLNRVLSGKRIPPDILVNWAVQIARGMNYLHDEAIVPIIHRDLKSSNILILQKVENGDLSNKILKITDFGLAREWHRTTKMSAAGTYAWMAPEVIRASMFSKGSDVWSYGVLLWELLTGEVPFRGIDGLAVAYGVAMNKLALPIPSTCPEPFAKLMEDCWNPDPHSRPSFTNILDQLTTIEESGFFEMPKDSFHCLQDNWKHEIQEMFDQLRAKEKELRTWEEELTRAALQQKNQEELLRRREQELAEREIDILERELNIIIHQLCQEKPRVKKRKGKFRKSRLKLKDGNRISLPSDFQHKFTVQASPTMDKRKSLINSRSSPPASPTIIPRLRAIQLTPGESSKTWGRSSVVPKEEGEEEEKRAPKKKGRTWGPGTLGQKELASGDEGSPQRREKANGLSTPSESPHFHLGLKSLVDGYKQWSSSAPNLVKGPRSSPALPGFTSLMEMEDEDSEGPGSGESRLQHSPSQSYLCIPFPRGEDGDGPSSDGIHEEPTPVNSATSTPQLTPTNSLKRGGAHHRRCEVALLGCGAVLAATGLGFDLLEAGKCQLLPLEEPEPPAREEKKRREGLFQRSSRPRRSTSPPSRKLFKKEEPMLLLGDPSASLTLLSLSSISECNSTRSLLRSDSDEIVVYEMPVSPVEAPPLSPCTHNPLVNVRVERFKRDPNQSLTPTHVTLTTPSQPSSHRRTPSDGALKPETLLASRSPSSNGLSPSPGAGMLKTPSPSRDPGEFPRLPDPNVVFPPTPRRWNTQQDSTLERPKTLEFLPRPRPSANRQRLDPWWFVSPSHARSTSPANSSSTETPSNLDSCFASSSSTVEERPGLPALLPFQAGPLPPTERTLLDLDAEGQSQDSTVPLCRAELNTHRPAPYEIQQEFWS.

Over residues 12–22 (ASAAAAAPPGE) the composition is skewed to low complexity. Residues 12-47 (ASAAAAAPPGEDGAGAGAEEEEEEEEEAAAAVGPGE) form a disordered region. A compositionally biased stretch (acidic residues) spans 29–39 (AEEEEEEEEEA). The SH3 domain maps to 52–116 (APLPYWTAVF…PSNYVTPRSA (65 aa)). In terms of domain architecture, Protein kinase spans 144 to 412 (LTLEEIIGIG…LTTIEESGFF (269 aa)). ATP-binding positions include 150 to 158 (IGIGGFGKV) and K171. The Proton acceptor role is filled by D268. Residues T304 and T305 each carry the phosphothreonine; by autocatalysis modification. Phosphoserine; by autocatalysis is present on S308. The residue at position 312 (T312) is a Phosphothreonine; by autocatalysis. Leucine-zipper regions lie at residues 430–451 (IQEMFDQLRAKEKELRTWEEEL) and 465–486 (LRRREQELAEREIDILERELNI). Disordered stretches follow at residues 532–636 (ASPT…PHFH), 675–742 (MEDE…LKRG), 781–819 (EEPEPPAREEKKRREGLFQRSSRPRRSTSPPSRKLFKKE), and 890–1038 (RDPN…CFAS). The residue at position 533 (S533) is a Phosphoserine. Composition is skewed to polar residues over residues 566-575 (PGESSKTWGR) and 723-739 (PVNSATSTPQLTPTNSL). Residues 785 to 797 (PPAREEKKRREGL) show a composition bias toward basic and acidic residues. Over residues 893 to 910 (NQSLTPTHVTLTTPSQPS) the composition is skewed to polar residues. Low complexity predominate over residues 929-944 (SRSPSSNGLSPSPGAG). Residues 1014–1038 (HARSTSPANSSSTETPSNLDSCFAS) show a composition bias toward polar residues.

Belongs to the protein kinase superfamily. STE Ser/Thr protein kinase family. MAP kinase kinase kinase subfamily. In terms of assembly, homodimer. It depends on Mg(2+) as a cofactor. In terms of processing, autophosphorylation on serine and threonine residues within the activation loop plays a role in enzyme activation. Thr-312 is likely to be the main autophosphorylation site. Autophosphorylation also occurs on Thr-304 and Ser-308. Expressed in epithelial tumor cell lines of colonic, breast and esophageal origin.

It catalyses the reaction L-seryl-[protein] + ATP = O-phospho-L-seryl-[protein] + ADP + H(+). It carries out the reaction L-threonyl-[protein] + ATP = O-phospho-L-threonyl-[protein] + ADP + H(+). Its activity is regulated as follows. Homodimerization via the leucine zipper domains is required for autophosphorylation of multiple sites in the activation loop and subsequent activation. Autophosphorylation at Thr-312 is the key step in activation of MAP3K9/MLK1 and is required for full phosphorylation. Autophosphorylation at Thr-304 and Ser-308 have been shown to be of secondary importance in the activation of MAP3K9/MLK1. CEP-1347 and many indolocarbazole analogs have been shown to act as inhibitors of MAP3K9/MLK1 activity. In terms of biological role, serine/threonine kinase which acts as an essential component of the MAP kinase signal transduction pathway. Plays an important role in the cascades of cellular responses evoked by changes in the environment. Once activated, acts as an upstream activator of the MKK/JNK signal transduction cascade through the phosphorylation of MAP2K4/MKK4 and MAP2K7/MKK7 which in turn activate the JNKs. The MKK/JNK signaling pathway regulates stress response via activator protein-1 (JUN) and GATA4 transcription factors. Also plays a role in mitochondrial death signaling pathway, including the release cytochrome c, leading to apoptosis. The chain is Mitogen-activated protein kinase kinase kinase 9 (MAP3K9) from Homo sapiens (Human).